The following is a 130-amino-acid chain: Fluoride-specific ion channel FluC (130 aa).

4 consecutive transmembrane segments (helical) span residues 3 to 23 (FVFL…YFVG), 38 to 58 (LGTF…GHLA), 67 to 87 (FGIF…SYGL), and 102 to 122 (ISYV…GWFL). The Na(+) site is built by Gly77 and Thr80.

It belongs to the fluoride channel Fluc/FEX (TC 1.A.43) family.

It localises to the cell inner membrane. The catalysed reaction is fluoride(in) = fluoride(out). Na(+) is not transported, but it plays an essential structural role and its presence is essential for fluoride channel function. Fluoride-specific ion channel. Important for reducing fluoride concentration in the cell, thus reducing its toxicity. The sequence is that of Fluoride-specific ion channel FluC from Helicobacter pylori (strain G27).